The chain runs to 423 residues: Lysosomal acid phosphatase (423 aa).

Positions 1-30 (MAGRRFGWSRAALLQLILGVNLMVMPRTQA) are cleaved as a signal peptide. Residues 31-380 (RTLRFVTLLY…QLAGGPADTE (350 aa)) lie on the Lumenal side of the membrane. Histidine 42 serves as the catalytic Nucleophile. Asparagine 92, asparagine 133, asparagine 167, asparagine 177, asparagine 191, and asparagine 267 each carry an N-linked (GlcNAc...) asparagine glycan. 3 disulfide bridges follow: cysteine 159/cysteine 370, cysteine 212/cysteine 310, and cysteine 345/cysteine 349. The active-site Proton donor is the aspartate 287. N-linked (GlcNAc...) asparagine glycans are attached at residues asparagine 322 and asparagine 331. A helical transmembrane segment spans residues 381–401 (VIVALAVCGSILFLLIVLLLT). Residues 402–423 (VLFRVQAQPPGYRHVPDGEDHA) are Cytoplasmic-facing.

It belongs to the histidine acid phosphatase family. The membrane-bound form is converted to the soluble form by sequential proteolytic processing. First, the C-terminal cytoplasmic tail is removed. Cleavage by a lysosomal protease releases the soluble form in the lysosome lumen.

The protein localises to the lysosome membrane. Its subcellular location is the lysosome lumen. The enzyme catalyses a phosphate monoester + H2O = an alcohol + phosphate. This chain is Lysosomal acid phosphatase (ACP2), found in Bos taurus (Bovine).